The following is a 636-amino-acid chain: Threonine--tRNA ligase (636 aa).

Residues 1–63 form the TGS domain; the sequence is MSSISIALPD…KDDSRVEIIT (63 aa). A catalytic region spans residues 243–534; that stretch reads DHRRLGRELD…LIEHYAGNFP (292 aa). Residues cysteine 335, histidine 386, and histidine 511 each coordinate Zn(2+).

It belongs to the class-II aminoacyl-tRNA synthetase family. As to quaternary structure, homodimer. Zn(2+) serves as cofactor.

Its subcellular location is the cytoplasm. The enzyme catalyses tRNA(Thr) + L-threonine + ATP = L-threonyl-tRNA(Thr) + AMP + diphosphate + H(+). In terms of biological role, catalyzes the attachment of threonine to tRNA(Thr) in a two-step reaction: L-threonine is first activated by ATP to form Thr-AMP and then transferred to the acceptor end of tRNA(Thr). Also edits incorrectly charged L-seryl-tRNA(Thr). This is Threonine--tRNA ligase from Pelobacter propionicus (strain DSM 2379 / NBRC 103807 / OttBd1).